Here is a 376-residue protein sequence, read N- to C-terminus: Probable ribonucleoside-diphosphate reductase small subunit 048L (376 aa).

Residues D110, E140, and H143 each coordinate Fe cation. The active site involves Y147. 3 residues coordinate Fe cation: E217, E251, and H254.

The protein belongs to the ribonucleoside diphosphate reductase small chain family. As to quaternary structure, heterotetramer composed of a homodimer of the large subunit (R1) and a homodimer of the small subunit (R2). Larger multisubunit protein complex are also active, composed of (R1)n(R2)n. Requires Fe cation as cofactor.

It catalyses the reaction a 2'-deoxyribonucleoside 5'-diphosphate + [thioredoxin]-disulfide + H2O = a ribonucleoside 5'-diphosphate + [thioredoxin]-dithiol. Functionally, ribonucleoside-diphosphate reductase holoenzyme provides the precursors necessary for viral DNA synthesis. Allows virus growth in non-dividing cells. Catalyzes the biosynthesis of deoxyribonucleotides from the corresponding ribonucleotides. The chain is Probable ribonucleoside-diphosphate reductase small subunit 048L from Invertebrate iridescent virus 3 (IIV-3).